The primary structure comprises 70 residues: Large ribosomal subunit protein bL31 (70 aa).

Zn(2+) contacts are provided by cysteine 16, cysteine 18, cysteine 37, and cysteine 40.

It belongs to the bacterial ribosomal protein bL31 family. Type A subfamily. Part of the 50S ribosomal subunit. Zn(2+) is required as a cofactor.

Its function is as follows. Binds the 23S rRNA. The protein is Large ribosomal subunit protein bL31 of Shewanella halifaxensis (strain HAW-EB4).